A 318-amino-acid polypeptide reads, in one-letter code: Galactose-1-phosphate uridylyltransferase (318 aa).

3 residues coordinate Zn(2+): cysteine 32, cysteine 35, and histidine 90. Asparagine 130 lines the UDP-alpha-D-glucose pocket. Residue histidine 141 coordinates Zn(2+). Residue histidine 143 is the Tele-UMP-histidine intermediate of the active site. Glutamine 145 contacts UDP-alpha-D-glucose.

It belongs to the galactose-1-phosphate uridylyltransferase type 1 family. Requires Zn(2+) as cofactor.

It catalyses the reaction alpha-D-galactose 1-phosphate + UDP-alpha-D-glucose = alpha-D-glucose 1-phosphate + UDP-alpha-D-galactose. The protein operates within carbohydrate metabolism; galactose metabolism. The polypeptide is Galactose-1-phosphate uridylyltransferase (galT) (Thermotoga maritima (strain ATCC 43589 / DSM 3109 / JCM 10099 / NBRC 100826 / MSB8)).